An 888-amino-acid chain; its full sequence is MARRRSCQLHQVISLFTFAVGVNICLGVTANRIKRAEGWGEGPPTVLSDSPSINISGSCKGRCFELQEAGPPDCRCDNLCKSYSSCCLDFDELCLKTAGGWECTKDRCGEVRNEDHACHCSEDCLARGDCCTNYQVVCKGESHWVDDDCEEIKTPECPAGFVRPPLIIFSVDGFRASYMKKGSKVMPNIEKLRSCGTHSPYMRPVYPTKTFPNLYTLATGLYPESHGIVGNSMYDPVFDAHFNLRGREKFNHRWWGGQPLWITATKQGVIAGTFFWPVVIPHERRILTILQWLTLPDHERPSVYAFYSEQPDFSGHKYGPFGPEMTNPLRDIDKTVGQLMDGLKQLKLHRCVNVIFVGDHGMEDVTCDRTEFLSNYLTNVDDIILVPGTLGRIRPKFNNHAKYDPKVIIANLTCKKPDQHFKPYLKQHLPKRLHYANNRRIEDVHLLVERRWHVARKPLEVYKKPSGKCFFQGDHGFDNKVNSMQTVFVGYGPTFKYKTKVPPFENIELYNVMCDLLGLKPAPNNGTHGSLNHLLRTNTFRPTVPEEVTRPNYPGVMYLQSDFDLGCTCDDKAEPKNKLDELNKHLHIKESTEAETRKFRGSKNEIKENVNGNFEPRKERHLLYGRPAVLYRTRYDILYHTDFESGYSEIFLMPLWTSYTVSKQADVSDIPAHLTNCVRPDVRVSPSFSQSCLAYKNDKQMSYGFLFPPYLSSSPEAKYDAFLVTNMVPMYPAFKRIWNYFQRVLVKKYASERNGVNVISGPIFDYDYDGLHDTQDKIKQYVEGSSVPVPTHYYSILTSCLDFTQPADRCDGPLSVSAFVLPHRPDNDESCNSSEDESKWVEELLKMHTARVRDIEHLTSLDFFRKTSRSYPEILTLKTYLQTYESEI.

An N-terminal signal peptide occupies residues M1 to G27. Residues V28–R35 constitute a propeptide, removed by furin. N-linked (GlcNAc...) asparagine glycosylation occurs at N54. 2 SMB domains span residues I55–A98 and G99–H143. 10 cysteine pairs are disulfide-bonded: C59–C76, C63–C94, C74–C87, C80–C86, C103–C120, C108–C138, C118–C131, C124–C130, C149–C195, and C157–C351. Residues R127 to D129 carry the Cell attachment site motif. Residues V145–P502 are phosphodiesterase. Zn(2+) is bound by residues D172 and T210. The active-site Nucleophile is T210. 1-(9Z-octadecenoyl)-sn-glycero-3-phosphate-binding residues include T210, N231, and D312. 3 residues coordinate 1-hexadecanoyl-sn-glycero-3-phosphate: T210, N231, and D312. 3 residues coordinate 1-tetradecanoyl-sn-glycerol 3-phosphate: T210, N231, and D312. Zn(2+)-binding residues include D312, H316, D359, and H360. Cystine bridges form between C367–C469, C414–C831, C567–C692, C569–C677, and C800–C810. N411 carries an N-linked (GlcNAc...) asparagine glycan. Residue H475 participates in Zn(2+) binding. H475 is a binding site for 1-(9Z-octadecenoyl)-sn-glycero-3-phosphate. H475 lines the 1-hexadecanoyl-sn-glycero-3-phosphate pocket. Position 475 (H475) interacts with 1-tetradecanoyl-sn-glycerol 3-phosphate. N525 carries an N-linked (GlcNAc...) asparagine glycan. The tract at residues L623–I888 is nuclease-like domain. Positions 765, 767, 769, 771, and 773 each coordinate Ca(2+). An N-linked (GlcNAc...) asparagine glycan is attached at N832. The required for secretion stretch occupies residues I855–T876.

It belongs to the nucleotide pyrophosphatase/phosphodiesterase family. Zn(2+) serves as cofactor. It depends on Ca(2+) as a cofactor. N-glycosylation, but not furin-cleavage, plays a critical role on secretion and on lysoPLD activity. Post-translationally, the interdomain disulfide bond between Cys-414 and Cys-831 is essential for catalytic activity. As to expression, detected in fetal serum (at protein level).

It localises to the secreted. The catalysed reaction is a 1-O-alkyl-sn-glycero-3-phosphoethanolamine + H2O = a 1-O-alkyl-sn-glycero-3-phosphate + ethanolamine + H(+). It carries out the reaction a 1-acyl-sn-glycero-3-phosphoethanolamine + H2O = a 1-acyl-sn-glycero-3-phosphate + ethanolamine + H(+). The enzyme catalyses 1-(9Z-octadecenoyl)-sn-glycero-3-phosphoethanolamine + H2O = 1-(9Z-octadecenoyl)-sn-glycero-3-phosphate + ethanolamine + H(+). It catalyses the reaction a 1-O-alkyl-sn-glycero-3-phosphocholine + H2O = a 1-O-alkyl-sn-glycero-3-phosphate + choline + H(+). The catalysed reaction is 1-O-(9Z-octadecenyl)-sn-glycero-3-phosphocholine + H2O = 1-O-(9Z-octadecenyl)-sn-glycero-3-phosphate + choline + H(+). It carries out the reaction 1-O-hexadecyl-sn-glycero-3-phosphocholine + H2O = 1-O-hexadecyl-sn-glycero-3-phosphate + choline + H(+). The enzyme catalyses a 1-O-(1Z-alkenyl)-sn-glycero-3-phosphocholine + H2O = a 1-O-(1Z-alkenyl)-sn-glycero-3-phosphate + choline + H(+). It catalyses the reaction a 1-acyl-sn-glycero-3-phosphocholine + H2O = a 1-acyl-sn-glycero-3-phosphate + choline + H(+). The catalysed reaction is 1-dodecanoyl-sn-glycero-3-phosphocholine + H2O = 1-dodecanoyl-sn-glycerol 3-phosphate + choline + H(+). It carries out the reaction 1-(9Z-octadecenoyl)-sn-glycero-3-phosphocholine + H2O = 1-(9Z-octadecenoyl)-sn-glycero-3-phosphate + choline + H(+). The enzyme catalyses 1-tetradecanoyl-sn-glycero-3-phosphocholine + H2O = 1-tetradecanoyl-sn-glycerol 3-phosphate + choline + H(+). It catalyses the reaction 1-decanoyl-sn-glycero-3-phosphocholine + H2O = 1-decanoyl-sn-glycero-3-phosphate + choline + H(+). The catalysed reaction is 1-octadecanoyl-sn-glycero-3-phosphocholine + H2O = 1-octadecanoyl-sn-glycero-3-phosphate + choline + H(+). It carries out the reaction 1-hexadecanoyl-sn-glycero-3-phosphocholine + H2O = 1-hexadecanoyl-sn-glycero-3-phosphate + choline + H(+). The enzyme catalyses 1-hexanoyl-sn-glycero-3-phosphocholine + H2O = 1-hexanoyl-sn-glycero-3-phosphate + choline + H(+). It catalyses the reaction 1-(9Z,12Z)-octadecadienoyl-sn-glycero-3-phosphocholine + H2O = 1-(9Z,12Z)-octadecadienoyl-sn-glycero-3-phosphate + choline + H(+). The catalysed reaction is sphing-4-enine-phosphocholine + H2O = sphing-4-enine 1-phosphate + choline + H(+). It carries out the reaction 1-(5Z,8Z,11Z,14Z-eicosatetraenoyl)-sn-glycero-3-phosphocholine + H2O = 1-(5Z,8Z,11Z,14Z-eicosatetraenoyl)-sn-glycero-3-phosphate + choline + H(+). The enzyme catalyses a 2-acyl-sn-glycero-3-phosphocholine + H2O = a 2-acyl-sn-glycerol 3-phosphate + choline + H(+). It catalyses the reaction a 1,2-diacyl-sn-glycero-3-phosphocholine + H2O = a 1,2-diacyl-sn-glycero-3-phosphate + choline + H(+). The catalysed reaction is 1,2-dioctanoyl-sn-glycero-3-phosphocholine + H2O = 1,2-dioctanoyl-sn-glycero-3-phosphate + choline + H(+). It carries out the reaction 1,2-didecanoyl-sn-glycero-3-phosphocholine + H2O = 1,2-didecanoyl-sn-glycero-3-phosphate + choline + H(+). The enzyme catalyses a 1-acyl-sn-glycero-3-phospho-L-serine + H2O = a 1-acyl-sn-glycero-3-phosphate + L-serine + H(+). It catalyses the reaction 1-(9Z-octadecenoyl)-sn-glycero-3-phospho-L-serine + H2O = 1-(9Z-octadecenoyl)-sn-glycero-3-phosphate + L-serine + H(+). The catalysed reaction is a 2-acyl-sn-glycero-3-phospho-L-serine + H2O = a 2-acyl-sn-glycerol 3-phosphate + L-serine + H(+). Secreted lysophospholipase D that hydrolyzes lysophospholipids to produce the signaling molecule lysophosphatidic acid (LPA) in extracellular fluids. Its major substrate is lysophosphatidylcholine. Can also act on sphingosylphosphorylcholine producing sphingosine-1-phosphate, a modulator of cell motility. Can hydrolyze, in vitro, bis-pNPP, to some extent pNP-TMP, and barely ATP. Involved in several motility-related processes such as angiogenesis and neurite outgrowth. Acts as an angiogenic factor by stimulating migration of smooth muscle cells and microtubule formation. Stimulates migration of melanoma cells, probably via a pertussis toxin-sensitive G protein. May have a role in induction of parturition. Possible involvement in cell proliferation and adipose tissue development. Required for LPA production in activated platelets, cleaves the sn-1 lysophospholipids to generate sn-1 lysophosphatidic acids containing predominantly 18:2 and 20:4 fatty acids. Shows a preference for the sn-1 to the sn-2 isomer of 1-O-alkyl-sn-glycero-3-phosphocholine (lyso-PAF). The protein is Autotaxin of Bos taurus (Bovine).